A 327-amino-acid polypeptide reads, in one-letter code: tRNA uridine(34) hydroxylase (327 aa).

Residues 123 to 217 enclose the Rhodanese domain; the sequence is SDPEVLLVDT…YLEEVKQEES (95 aa). Cysteine 177 functions as the Cysteine persulfide intermediate in the catalytic mechanism.

Belongs to the TrhO family.

It catalyses the reaction uridine(34) in tRNA + AH2 + O2 = 5-hydroxyuridine(34) in tRNA + A + H2O. Its function is as follows. Catalyzes oxygen-dependent 5-hydroxyuridine (ho5U) modification at position 34 in tRNAs. In Shewanella piezotolerans (strain WP3 / JCM 13877), this protein is tRNA uridine(34) hydroxylase.